The following is a 286-amino-acid chain: Ribosomal RNA small subunit methyltransferase A (286 aa).

S-adenosyl-L-methionine-binding residues include Asn-28, Leu-30, Gly-55, Glu-77, Asp-103, and Asn-123.

Belongs to the class I-like SAM-binding methyltransferase superfamily. rRNA adenine N(6)-methyltransferase family. RsmA subfamily.

It is found in the cytoplasm. The catalysed reaction is adenosine(1518)/adenosine(1519) in 16S rRNA + 4 S-adenosyl-L-methionine = N(6)-dimethyladenosine(1518)/N(6)-dimethyladenosine(1519) in 16S rRNA + 4 S-adenosyl-L-homocysteine + 4 H(+). Functionally, specifically dimethylates two adjacent adenosines (A1518 and A1519) in the loop of a conserved hairpin near the 3'-end of 16S rRNA in the 30S particle. May play a critical role in biogenesis of 30S subunits. In Bradyrhizobium sp. (strain ORS 278), this protein is Ribosomal RNA small subunit methyltransferase A.